We begin with the raw amino-acid sequence, 1770 residues long: Serine/threonine-protein kinase RIM15 (1770 aa).

The tract at residues 334-358 is disordered; sequence HSLSTFPQDNGNNNNNNNNNNNNNN. A compositionally biased stretch (low complexity) spans 343-358; the sequence is NGNNNNNNNNNNNNNN. Phosphoserine is present on residues Ser380 and Ser476. 2 disordered regions span residues 530 to 563 and 583 to 694; these read TPTANDIRHPSPLPRSCSNTVMKLPTPRRKLDSN and STIS…NSVL. Residues 583-601 are compositionally biased toward polar residues; that stretch reads STISIDRDNNTNSRGSSMK. Low complexity predominate over residues 611–632; that stretch reads SRTSNSERPSSSSSRLGIRSRS. A compositionally biased stretch (basic and acidic residues) spans 637–660; sequence QKIEYSHVDNDDRTNEMLSRDKDS. Positions 669–692 are enriched in low complexity; the sequence is TTITSSTQATTTGTKTNSNNSTNS. Thr704 is modified (phosphothreonine). 4 positions are modified to phosphoserine: Ser709, Ser733, Ser736, and Ser737. Residue Thr747 is modified to Phosphothreonine. Residues 794 to 1254 enclose the Protein kinase domain; it reads YDILKPISKG…IQEIKDHPYF (461 aa). Residues 800–808 and Lys823 each bind ATP; that span reads ISKGAYGSV. The active-site Proton acceptor is Asp918. Over residues 970–980 the composition is skewed to low complexity; sequence NNFTMNNNNSN. The disordered stretch occupies residues 970-1032; the sequence is NNFTMNNNNS…MTPTPSTNTV (63 aa). Residues 981 to 990 are compositionally biased toward polar residues; sequence HSQLSTPDSF. Positions 1014-1031 are enriched in low complexity; that stretch reads YSSTSNSHSMTPTPSTNT. Ser1044, Ser1048, and Ser1064 each carry phosphoserine. Thr1075 is modified (phosphothreonine; by PHO85). In terms of domain architecture, AGC-kinase C-terminal spans 1255-1320; that stretch reads KNVDWDHVYD…NTDVSELSAA (66 aa). Positions 1378–1391 are enriched in low complexity; sequence TGYITPNGTGTTTT. Residues 1378-1403 are disordered; it reads TGYITPNGTGTTTTSAKNSPNLKNLS. Residues 1392–1401 are compositionally biased toward polar residues; it reads SAKNSPNLKN. Ser1421 bears the Phosphoserine mark. Disordered regions lie at residues 1448–1507 and 1519–1572; these read KSEH…STFG and FSTR…PANT. The span at 1463–1481 shows a compositional bias: low complexity; that stretch reads SSASLMGSSSDGSVSTPGS. 4 positions are modified to phosphoserine: Ser1531, Ser1538, Ser1542, and Ser1565. In terms of domain architecture, Response regulatory spans 1636-1750; that stretch reads DVLVCEPIPI…ELKKLVAKYA (115 aa). Phosphoserine is present on Ser1764.

This sequence belongs to the protein kinase superfamily. Ser/Thr protein kinase family. As to quaternary structure, interacts with the cyclin-dependent kinase (CDK) PHO85 and IGO1. Autophosphorylated. Phosphorylation by PKA strongly inhibits kinase activity. Phosphorylation by cyclin-CDK PHO80-PHO85 under favorable growth condition causes inactivation of RIM15 by promoting its export to the cytoplasm.

Its subcellular location is the cytoplasm. It is found in the nucleus. It catalyses the reaction L-seryl-[protein] + ATP = O-phospho-L-seryl-[protein] + ADP + H(+). It carries out the reaction L-threonyl-[protein] + ATP = O-phospho-L-threonyl-[protein] + ADP + H(+). Its activity is regulated as follows. Kinase activity is inhibited by phosphorylation by cAMP-dependent protein kinase (PKA). Functionally, protein kinase that positively regulates proper entry into stationary phase of cells under nutrient starvation conditions. Involved in glycogen and trehalose accumulation, derepression of stress-induced genes, induction of thermotolerance and starvation resistance, and proper G1 cell cycle arrest. Also involved in the activation of a meiotic genes activation pathway. Phosphorylates IGO1 and IGO2, both involved in the TORC1 control of gene expression and chronological life span. The sequence is that of Serine/threonine-protein kinase RIM15 (RIM15) from Saccharomyces cerevisiae (strain ATCC 204508 / S288c) (Baker's yeast).